An 880-amino-acid chain; its full sequence is DNA gyrase subunit A (880 aa).

The 496-residue stretch at 35–530 (LPDVRDGLKP…ASGDIDLEDL (496 aa)) folds into the Topo IIA-type catalytic domain. Catalysis depends on Tyr123, which acts as the O-(5'-phospho-DNA)-tyrosine intermediate. The GyrA-box motif lies at 557–563 (QRRGGKG).

Belongs to the type II topoisomerase GyrA/ParC subunit family. In terms of assembly, heterotetramer, composed of two GyrA and two GyrB chains. In the heterotetramer, GyrA contains the active site tyrosine that forms a transient covalent intermediate with DNA, while GyrB binds cofactors and catalyzes ATP hydrolysis.

Its subcellular location is the cytoplasm. The catalysed reaction is ATP-dependent breakage, passage and rejoining of double-stranded DNA.. Its function is as follows. A type II topoisomerase that negatively supercoils closed circular double-stranded (ds) DNA in an ATP-dependent manner to modulate DNA topology and maintain chromosomes in an underwound state. Negative supercoiling favors strand separation, and DNA replication, transcription, recombination and repair, all of which involve strand separation. Also able to catalyze the interconversion of other topological isomers of dsDNA rings, including catenanes and knotted rings. Type II topoisomerases break and join 2 DNA strands simultaneously in an ATP-dependent manner. This chain is DNA gyrase subunit A, found in Haemophilus influenzae (strain ATCC 51907 / DSM 11121 / KW20 / Rd).